The chain runs to 602 residues: Elongation factor 4 (602 aa).

Positions 7-189 (KYIRNFSIVA…AIVNKVPAPD (183 aa)) constitute a tr-type G domain. Residues 19–24 (DHGKST) and 136–139 (NKID) each bind GTP.

This sequence belongs to the TRAFAC class translation factor GTPase superfamily. Classic translation factor GTPase family. LepA subfamily.

Its subcellular location is the cell membrane. The catalysed reaction is GTP + H2O = GDP + phosphate + H(+). Required for accurate and efficient protein synthesis under certain stress conditions. May act as a fidelity factor of the translation reaction, by catalyzing a one-codon backward translocation of tRNAs on improperly translocated ribosomes. Back-translocation proceeds from a post-translocation (POST) complex to a pre-translocation (PRE) complex, thus giving elongation factor G a second chance to translocate the tRNAs correctly. Binds to ribosomes in a GTP-dependent manner. This Clostridium botulinum (strain 657 / Type Ba4) protein is Elongation factor 4.